A 343-amino-acid chain; its full sequence is S-adenosylmethionine:tRNA ribosyltransferase-isomerase (343 aa).

It belongs to the QueA family. In terms of assembly, monomer.

The protein localises to the cytoplasm. It catalyses the reaction 7-aminomethyl-7-carbaguanosine(34) in tRNA + S-adenosyl-L-methionine = epoxyqueuosine(34) in tRNA + adenine + L-methionine + 2 H(+). Its pathway is tRNA modification; tRNA-queuosine biosynthesis. Its function is as follows. Transfers and isomerizes the ribose moiety from AdoMet to the 7-aminomethyl group of 7-deazaguanine (preQ1-tRNA) to give epoxyqueuosine (oQ-tRNA). The polypeptide is S-adenosylmethionine:tRNA ribosyltransferase-isomerase (Syntrophotalea carbinolica (strain DSM 2380 / NBRC 103641 / GraBd1) (Pelobacter carbinolicus)).